The following is a 353-amino-acid chain: D-alanine--D-alanine ligase (353 aa).

One can recognise an ATP-grasp domain in the interval 141 to 349; sequence KAAFAAAGLS…LPQLVAELVD (209 aa). 176 to 231 lines the ATP pocket; the sequence is EQELGYPCFVKPANLGSSVGITKANNRDELLAGLHQAAALDPRLLVEQGVNARELE. Residues Asp-302, Glu-316, and Asn-318 each coordinate Mg(2+).

It belongs to the D-alanine--D-alanine ligase family. The cofactor is Mg(2+). It depends on Mn(2+) as a cofactor.

It localises to the cytoplasm. It catalyses the reaction 2 D-alanine + ATP = D-alanyl-D-alanine + ADP + phosphate + H(+). Its pathway is cell wall biogenesis; peptidoglycan biosynthesis. Functionally, cell wall formation. This chain is D-alanine--D-alanine ligase, found in Synechococcus sp. (strain WH7803).